The chain runs to 134 residues: Profilin-1 (134 aa).

Residues C13 and C118 are joined by a disulfide bond. The short motif at 84 to 100 (AVIRGKKGSGGITIKKT) is the Involved in PIP2 interaction element. Position 114 is a phosphothreonine (T114).

The protein belongs to the profilin family. As to quaternary structure, occurs in many kinds of cells as a complex with monomeric actin in a 1:1 ratio. Phosphorylated by MAP kinases.

It is found in the cytoplasm. It localises to the cytoskeleton. Functionally, binds to actin and affects the structure of the cytoskeleton. At high concentrations, profilin prevents the polymerization of actin, whereas it enhances it at low concentrations. This is Profilin-1 from Olea europaea (Common olive).